The following is an 846-amino-acid chain: DNA mismatch repair protein MutS (846 aa).

594 to 601 (GPNMSGKS) is an ATP binding site.

It belongs to the DNA mismatch repair MutS family.

In terms of biological role, this protein is involved in the repair of mismatches in DNA. It is possible that it carries out the mismatch recognition step. This protein has a weak ATPase activity. The polypeptide is DNA mismatch repair protein MutS (Macrococcus caseolyticus (strain JCSC5402) (Macrococcoides caseolyticum)).